The following is a 430-amino-acid chain: Adenylosuccinate synthetase (430 aa).

GTP contacts are provided by residues Gly-12–Lys-18 and Gly-40–Thr-42. The active-site Proton acceptor is Asp-13. Positions 13 and 40 each coordinate Mg(2+). Residues Asp-13–Lys-16, Asn-38–His-41, Thr-128, Arg-142, Gln-223, Thr-238, and Arg-302 contribute to the IMP site. Residue His-41 is the Proton donor of the active site. Position 298–304 (Val-298–Arg-304) interacts with substrate. GTP is bound by residues Arg-304, Lys-330–Asp-332, and Gly-412–Gly-414.

The protein belongs to the adenylosuccinate synthetase family. In terms of assembly, homodimer. Mg(2+) is required as a cofactor.

It is found in the cytoplasm. It catalyses the reaction IMP + L-aspartate + GTP = N(6)-(1,2-dicarboxyethyl)-AMP + GDP + phosphate + 2 H(+). It functions in the pathway purine metabolism; AMP biosynthesis via de novo pathway; AMP from IMP: step 1/2. Its function is as follows. Plays an important role in the de novo pathway of purine nucleotide biosynthesis. Catalyzes the first committed step in the biosynthesis of AMP from IMP. The sequence is that of Adenylosuccinate synthetase from Corynebacterium ammoniagenes (Brevibacterium ammoniagenes).